A 102-amino-acid chain; its full sequence is RNA-binding protein Hfq (102 aa).

In terms of domain architecture, Sm spans 9–68 (DPFLNALRRERVPVSIYLVNGIKLQGQIESFDQFVILLKNTVSQMVYKHAISTVVPSRPV). Residues 64-102 (PSRPVSHHSNTPSGGTSNYHHGNNPSAPQQPQQESDDAE) form a disordered region. Over residues 70-96 (HHSNTPSGGTSNYHHGNNPSAPQQPQQ) the composition is skewed to polar residues.

It belongs to the Hfq family. Homohexamer.

Its function is as follows. RNA chaperone that binds small regulatory RNA (sRNAs) and mRNAs to facilitate mRNA translational regulation in response to envelope stress, environmental stress and changes in metabolite concentrations. Also binds with high specificity to tRNAs. The polypeptide is RNA-binding protein Hfq (Serratia proteamaculans (strain 568)).